We begin with the raw amino-acid sequence, 322 residues long: Putative nickel/cobalt efflux system HI_1248 (322 aa).

The next 6 helical transmembrane spans lie at 7-27 (GLVL…WFFL), 54-74 (AGTT…LGPG), 100-120 (LSSL…VVVL), 137-157 (TALL…LRAY), 228-248 (IFVL…LAVL), and 294-314 (LIAG…TTIS).

This sequence belongs to the NiCoT transporter (TC 2.A.52) family.

It localises to the cell membrane. Efflux system for nickel and cobalt. The chain is Putative nickel/cobalt efflux system HI_1248 from Haemophilus influenzae (strain ATCC 51907 / DSM 11121 / KW20 / Rd).